The sequence spans 577 residues: Arginine--tRNA ligase (577 aa).

Residues 122–132 (PNVAKEMHVGH) carry the 'HIGH' region motif.

It belongs to the class-I aminoacyl-tRNA synthetase family. As to quaternary structure, monomer.

The protein localises to the cytoplasm. The enzyme catalyses tRNA(Arg) + L-arginine + ATP = L-arginyl-tRNA(Arg) + AMP + diphosphate. This is Arginine--tRNA ligase from Escherichia fergusonii (strain ATCC 35469 / DSM 13698 / CCUG 18766 / IAM 14443 / JCM 21226 / LMG 7866 / NBRC 102419 / NCTC 12128 / CDC 0568-73).